A 368-amino-acid polypeptide reads, in one-letter code: uncharacterized protein (368 aa).

The Response regulatory domain maps to 3–120 (KILLADDERI…QIISSLEEII (118 aa)). Residue D55 is modified to 4-aspartylphosphate. Residues 259–361 (SKMIRLIADE…GLTPSEFRRK (103 aa)) form the HTH araC/xylS-type domain. DNA-binding regions (H-T-H motif) lie at residues 278-299 (WAAK…KQET) and 327-351 (VSEI…KKYT).

Phosphorylated by YesM.

It is found in the cytoplasm. Member of the two-component regulatory system YesM/YesN. This is an uncharacterized protein from Bacillus subtilis (strain 168).